The primary structure comprises 982 residues: Mineralocorticoid receptor (982 aa).

The segment at 1–601 (METKGYHSLP…STGSSRPSKI (601 aa)) is modulating. Positions 230 to 242 (QGTPLTCSPNVEN) are enriched in polar residues. Disordered stretches follow at residues 230–328 (QGTP…AAST) and 345–375 (SGTS…PFPK). A phosphoserine mark is found at S249, S258, S282, S286, and S298. The span at 258–299 (SPLSSPLSSMKSSISSPPSHCSVKSPVSSPNNVTPRSSVSSP) shows a compositional bias: low complexity. A compositionally biased stretch (polar residues) spans 300-328 (ANINNSRCSVSSPSNTNNRSTLSSPAAST). Residues 345 to 354 (SGTSAGSSTS) show a composition bias toward low complexity. Zn(2+) contacts are provided by C602, C605, C619, C622, C638, C644, C654, and C657. 2 NR C4-type zinc fingers span residues 602–622 (CLVC…CGSC) and 638–662 (CAGR…LQKC). The nuclear receptor DNA-binding region spans 602-667 (CLVCGDEASG…RLQKCLQAGM (66 aa)). The segment at 668 to 723 (NLGARRSKKLGKLKGIHEEQPQQQPPPPPPPPQSPEEGTTYIAPAKEPSVNTALVP) is hinge. The interval 682 to 708 (GIHEEQPQQQPPPPPPPPQSPEEGTTY) is disordered. Pro residues predominate over residues 690 to 701 (QQPPPPPPPPQS). The NR LBD domain maps to 724-962 (QLSAISRALT…EFPAMLVEII (239 aa)). Residues N768 and Q774 each coordinate 21-hydroxyprogesterone. Aldosterone is bound by residues N768 and Q774. The progesterone site is built by N768 and Q774. An important for coactivator binding region spans residues 780–783 (KWAK). 21-hydroxyprogesterone-binding residues include R815 and T943. Residues R815 and T943 each contribute to the aldosterone site. The progesterone site is built by R815 and T943.

This sequence belongs to the nuclear hormone receptor family. NR3 subfamily. Post-translationally, phosphorylated. In terms of tissue distribution, expressed in hippocampus, being restricted to the more superficial cortical layers.

The protein localises to the cytoplasm. The protein resides in the nucleus. In terms of biological role, receptor for both mineralocorticoids (MC) such as aldosterone and glucocorticoids (GC) such as corticosterone or cortisol. Binds to mineralocorticoid response elements (MRE) and transactivates target genes. The effect of MC is to increase ion and water transport and thus raise extracellular fluid volume and blood pressure and lower potassium levels. The protein is Mineralocorticoid receptor (NR3C2) of Saimiri sciureus (Common squirrel monkey).